The following is a 240-amino-acid chain: Glycerol uptake facilitator protein 3 (240 aa).

A run of 2 helical transmembrane segments spans residues 11 to 31 (LGEFLGTFILILLGDGVVAGV) and 41 to 61 (AGWVAITLGWGFAVTMGVYAS). The NPA 1 motif lies at 70–72 (NPA). 3 consecutive transmembrane segments (helical) span residues 88-108 (VIPYSAAQIAGGVIGGLVVWL), 137-157 (FWNFISEVIGTFVLVFGLLAF), and 162-182 (FTAGLNPIVVGILIIAIGLSL). The NPA 2 signature appears at 191–193 (NPA). The helical transmembrane segment at 219 to 239 (WVPIAGPLVGGALGALLFNVL) threads the bilayer.

Belongs to the MIP/aquaporin (TC 1.A.8) family.

Its subcellular location is the cell membrane. Its function is as follows. Transporter that facilitates the transmembrane diffusion of water, dihydroxyacetone, glycerol and H(2)O(2). Is not permeable to urea and D/L-lactic acid. The protein is Glycerol uptake facilitator protein 3 of Lactiplantibacillus plantarum (strain ATCC BAA-793 / NCIMB 8826 / WCFS1) (Lactobacillus plantarum).